The following is a 256-amino-acid chain: tRNA (guanine-N(7)-)-methyltransferase (256 aa).

Positions 1 to 15 are enriched in polar residues; that stretch reads MVATGGQAQDQSHNQ. Residues 1 to 22 are disordered; that stretch reads MVATGGQAQDQSHNQEPGVLCP. Residues G79, 102-103, 137-138, and L157 each bind S-adenosyl-L-methionine; these read EI and NA. The active site involves D160. Position 235-237 (235-237) interacts with S-adenosyl-L-methionine; it reads SEE.

Belongs to the class I-like SAM-binding methyltransferase superfamily. TrmB family.

The protein localises to the nucleus. It carries out the reaction guanosine(46) in tRNA + S-adenosyl-L-methionine = N(7)-methylguanosine(46) in tRNA + S-adenosyl-L-homocysteine. Its pathway is tRNA modification; N(7)-methylguanine-tRNA biosynthesis. Functionally, catalyzes the formation of N(7)-methylguanine at position 46 (m7G46) in tRNA. The chain is tRNA (guanine-N(7)-)-methyltransferase from Drosophila yakuba (Fruit fly).